Here is a 101-residue protein sequence, read N- to C-terminus: Protein TraL (101 aa).

The protein resides in the cell outer membrane. Its function is as follows. Membrane protein involved in F pilin formation. This is Protein TraL (traL) from Salmonella typhi.